A 579-amino-acid polypeptide reads, in one-letter code: Thiol:disulfide interchange protein DsbD (579 aa).

An N-terminal signal peptide occupies residues 1-16; it reads MKKLFLFFTLIFTAFA. 2 cysteine pairs are disulfide-bonded: C124–C129 and C193–C315. 8 helical membrane-spanning segments follow: residues 178–198, 230–250, 254–274, 296–316, 337–357, 376–396, 397–417, and 420–440; these read IFGF…LPML, LTYT…QIAL, YVMI…FGLF, GAFG…SPCT, AVTL…ITLF, FGFV…PEVW, ESRL…LQMS, and GFGY…VQPL. The Thioredoxin domain occupies 449-579; that stretch reads TTTQSAVENM…AFSNWIEKLL (131 aa). C495 and C498 are oxidised to a cystine.

This sequence belongs to the thioredoxin family. DsbD subfamily.

It is found in the cell inner membrane. It catalyses the reaction [protein]-dithiol + NAD(+) = [protein]-disulfide + NADH + H(+). The catalysed reaction is [protein]-dithiol + NADP(+) = [protein]-disulfide + NADPH + H(+). In terms of biological role, required to facilitate the formation of correct disulfide bonds in some periplasmic proteins and for the assembly of the periplasmic c-type cytochromes. Acts by transferring electrons from cytoplasmic thioredoxin to the periplasm. This transfer involves a cascade of disulfide bond formation and reduction steps. The sequence is that of Thiol:disulfide interchange protein DsbD from Haemophilus influenzae (strain PittGG).